Reading from the N-terminus, the 138-residue chain is Large ribosomal subunit protein bL17 (138 aa).

Belongs to the bacterial ribosomal protein bL17 family. Part of the 50S ribosomal subunit. Contacts protein L32.

This is Large ribosomal subunit protein bL17 from Buchnera aphidicola subsp. Schizaphis graminum (strain Sg).